The following is a 192-amino-acid chain: GTP cyclohydrolase 1 (192 aa).

Zn(2+) contacts are provided by Cys-76, His-79, and Cys-148.

This sequence belongs to the GTP cyclohydrolase I family. As to quaternary structure, toroid-shaped homodecamer, composed of two pentamers of five dimers.

The enzyme catalyses GTP + H2O = 7,8-dihydroneopterin 3'-triphosphate + formate + H(+). The protein operates within cofactor biosynthesis; 7,8-dihydroneopterin triphosphate biosynthesis; 7,8-dihydroneopterin triphosphate from GTP: step 1/1. This chain is GTP cyclohydrolase 1, found in Carboxydothermus hydrogenoformans (strain ATCC BAA-161 / DSM 6008 / Z-2901).